The primary structure comprises 635 residues: Extracellular metalloproteinase 1 (635 aa).

Residues 1–19 (MHGLLLAAGLLSLPLHVLA) form the signal peptide. A propeptide spanning residues 20 to 246 (HPQPSTSTSL…VHNVVDYVAH (227 aa)) is cleaved from the precursor. Asn-287 is a glycosylation site (N-linked (GlcNAc...) asparagine). His-430 serves as a coordination point for Zn(2+). Glu-431 is a catalytic residue. Residue His-434 coordinates Zn(2+). N-linked (GlcNAc...) asparagine glycosylation is found at Asn-475, Asn-594, and Asn-623.

Belongs to the peptidase M36 family. Requires Zn(2+) as cofactor.

It is found in the secreted. Functionally, secreted metalloproteinase probably acting as a virulence factor. The chain is Extracellular metalloproteinase 1 (MEP1) from Trichophyton rubrum (Athlete's foot fungus).